The sequence spans 141 residues: Hemoglobin subunit alpha (141 aa).

Residues 1–141 (VLSAADKTHV…VSTVLVSKYR (141 aa)) form the Globin domain. Ser3 is modified (phosphoserine). Lys7 is subject to N6-succinyllysine. A Phosphothreonine modification is found at Thr8. N6-succinyllysine is present on Lys11. Residue Lys16 is modified to N6-acetyllysine; alternate. The residue at position 16 (Lys16) is an N6-succinyllysine; alternate. At Ser35 the chain carries Phosphoserine. Lys40 is subject to N6-succinyllysine. The residue at position 49 (Ser49) is a Phosphoserine. O2 is bound at residue His58. Residue His87 coordinates heme b. Ser102 is modified (phosphoserine). Residue Thr108 is modified to Phosphothreonine. Phosphoserine is present on Ser124. Thr134 carries the post-translational modification Phosphothreonine. Ser138 is subject to Phosphoserine.

It belongs to the globin family. As to quaternary structure, heterotetramer of two alpha chains and two beta chains. In terms of tissue distribution, red blood cells.

Involved in oxygen transport from the lung to the various peripheral tissues. In terms of biological role, hemopressin acts as an antagonist peptide of the cannabinoid receptor CNR1. Hemopressin-binding efficiently blocks cannabinoid receptor CNR1 and subsequent signaling. This is Hemoglobin subunit alpha (HBA) from Dasypus novemcinctus (Nine-banded armadillo).